Reading from the N-terminus, the 1133-residue chain is Roquin-1 (1133 aa).

Residues Cys14, Cys17, Cys33, His35, Cys38, Cys50, and Asp53 each contribute to the Zn(2+) site. The RING-type; degenerate zinc-finger motif lies at 14–54 (CPICTQTFDETIRKPISLGCGHTVCKMCLNKLHRKACPFDQ). Positions 89–173 (GVEDTKHYEE…RTVTELILQH (85 aa)) are HEPN-N. The tract at residues 174 to 326 (QNPQQLSSNL…MQSIIDKLQT (153 aa)) is ROQ. The segment at 327 to 396 (PASFAQSVQE…VVHGLVDYIQ (70 aa)) is HEPN-C. The C3H1-type zinc finger occupies 413–441 (KYKTYMCRDMKQRGGCPRGASCTFAHSQE). 4 positions are modified to phosphoserine: Ser462, Ser531, Ser535, and Ser863. Positions 505–542 (TQLIPRGTDPSYDSSLKPGKIDHLSSSAPGSPPDLLES) are disordered. Disordered stretches follow at residues 1000 to 1019 (NTLAGQSQPPPPPPPKWPGM), 1058 to 1078 (NTSKQAENGQPEPQNKVPAED), and 1094 to 1133 (QENISLLSNKTSSLNLSEDPEGGGDNNDSQRSGVTPSSAP). Residues 1007–1016 (QPPPPPPPKW) show a composition bias toward pro residues. A compositionally biased stretch (polar residues) spans 1058-1070 (NTSKQAENGQPEP). Over residues 1096–1110 (NISLLSNKTSSLNLS) the composition is skewed to low complexity. At Ser1110 the chain carries Phosphoserine. The span at 1119-1133 (NNDSQRSGVTPSSAP) shows a compositional bias: polar residues.

As to quaternary structure, able to homodimerize. Interacts with DDX6 and EDC4. Interacts with CCR4-NOT deadenylase complex. Interacts with RC3H1; the interaction is RNA independent. Proteolytically cleaved after Arg-510 and Arg-579 by MALT1 in activated CD4(+) T cells; cleavage at Arg-510 and Arg-579 is critical for promoting RC3H1 degradation in response to T-cell receptor (TCR) stimulation, and hence is necessary for prolonging the stability of a set of mRNAs controlling Th17 cell differentiation. Widely expressed. Expressed at higher level in cerebellum, spleen, ovary and liver.

It is found in the cytoplasm. Its subcellular location is the P-body. It localises to the cytoplasmic granule. The catalysed reaction is S-ubiquitinyl-[E2 ubiquitin-conjugating enzyme]-L-cysteine + [acceptor protein]-L-lysine = [E2 ubiquitin-conjugating enzyme]-L-cysteine + N(6)-ubiquitinyl-[acceptor protein]-L-lysine.. It functions in the pathway protein modification; protein ubiquitination. Functionally, post-transcriptional repressor of mRNAs containing a conserved stem loop motif, called constitutive decay element (CDE), which is often located in the 3'-UTR, as in HMGXB3, ICOS, IER3, NFKBID, NFKBIZ, PPP1R10, TNF, TNFRSF4 and in many more mRNAs. Cleaves translationally inactive mRNAs harboring a stem-loop (SL), often located in their 3'-UTRs, during the early phase of inflammation in a helicase UPF1-independent manner. Binds to CDE and promotes mRNA deadenylation and degradation. This process does not involve miRNAs. In follicular helper T (Tfh) cells, represses of ICOS and TNFRSF4 expression, thus preventing spontaneous Tfh cell differentiation, germinal center B-cell differentiation in the absence of immunization and autoimmunity. In resting or LPS-stimulated macrophages, controls inflammation by suppressing TNF expression. Also recognizes CDE in its own mRNA and in that of paralogous RC3H2, possibly leading to feedback loop regulation. Recognizes and binds mRNAs containing a hexaloop stem-loop motif, called alternative decay element (ADE). Together with ZC3H12A, destabilizes TNFRSF4/OX40 mRNA by binding to the conserved stem loop structure in its 3'UTR. Able to interact with double-stranded RNA (dsRNA). miRNA-binding protein that regulates microRNA homeostasis. Enhances DICER-mediated processing of pre-MIR146a but reduces mature MIR146a levels through an increase of 3' end uridylation. Both inhibits ICOS mRNA expression and they may act together to exert the suppression. Acts as a ubiquitin E3 ligase. Pairs with E2 enzymes UBE2A, UBE2B, UBE2D2, UBE2F, UBE2G1, UBE2G2 and UBE2L3 and produces polyubiquitin chains. Shows the strongest activity when paired with UBE2N:UBE2V1 or UBE2N:UBE2V2 E2 complexes and generate both short and long polyubiquitin chains. This Homo sapiens (Human) protein is Roquin-1.